A 292-amino-acid chain; its full sequence is Elongation factor Ts (292 aa).

Residues 79–82 (TDFV) form an involved in Mg(2+) ion dislocation from EF-Tu region.

This sequence belongs to the EF-Ts family.

The protein resides in the cytoplasm. In terms of biological role, associates with the EF-Tu.GDP complex and induces the exchange of GDP to GTP. It remains bound to the aminoacyl-tRNA.EF-Tu.GTP complex up to the GTP hydrolysis stage on the ribosome. In Xanthomonas campestris pv. campestris (strain ATCC 33913 / DSM 3586 / NCPPB 528 / LMG 568 / P 25), this protein is Elongation factor Ts.